We begin with the raw amino-acid sequence, 125 residues long: Salivary protein 15 Ipac-1 (125 aa).

The signal sequence occupies residues M1–A15. 2 N-linked (GlcNAc...) asparagine glycosylation sites follow: N82 and N94. Positions G106–C125 are CD4-binding.

Belongs to the salp15 family. In terms of assembly, interacts with host CD4. Interacts with host DC-SIGN (CD209). Interacts with Borrelia outer surface protein C (OspC). Expressed in salivary glands.

The protein resides in the secreted. Functionally, salivary tick protein that downregulates host immune system by binding to both dendritic cells, and CD4(+) T cells. Specifically binds to the CD4 coreceptor on T cells. This interaction prevents the activation of the Src kinase, Lck, and its downstream substrate Zap-70, and results in deficient activation of PLCgamma1, the repression of calcium fluxes triggered by T-cell antigen receptor (TCR) ligation, and a subsequent reduction in interleukin-2 production. This salivary protein also binds to DC-SIGN (CD209) on dendritic cells (DC) and activates the Raf-1 kinase/MEK signaling pathway that results in down-regulating expression of pro-inflammatory cytokines. Furthermore, it inhibits T cell proliferation induced by DCs. It also inhibits in vitro keratinocyte inflammation induced by Borrelia burgdorferi or by the major outer surface protein (OspC) of Borrelia. In addition, it downregulates chemokines and monocyte chemoattractant protein 1, as well as several antimicrobial peptides such as defensins, cathelicidin, psoriasin, and RNase 7. Apart from its immunomodulatory activities, it is also associated with protection of Borrelia spirochetes from antibody-mediated killing through its binding to OspC. In vivo, tests on different immune disease animal models show promising therapeutic results, e.g., in inhibiting HIV infection, experimental autoimmune encephalomyelitis, transplantation rejection, and asthma. This is Salivary protein 15 Ipac-1 from Ixodes pacificus (Western black-legged tick).